Reading from the N-terminus, the 411-residue chain is Tyrosine--tRNA ligase (411 aa).

Tyr34 provides a ligand contact to L-tyrosine. The 'HIGH' region motif lies at 39–48 (CTATSLHIGS). Tyr171 and Gln175 together coordinate L-tyrosine. Residues 231 to 235 (KMGKT) carry the 'KMSKS' region motif. Residue Lys234 participates in ATP binding. The S4 RNA-binding domain occupies 345–411 (ISAYELFHEA…GKKRHILVRV (67 aa)).

The protein belongs to the class-I aminoacyl-tRNA synthetase family. TyrS type 1 subfamily. In terms of assembly, homodimer.

It is found in the cytoplasm. The enzyme catalyses tRNA(Tyr) + L-tyrosine + ATP = L-tyrosyl-tRNA(Tyr) + AMP + diphosphate + H(+). Catalyzes the attachment of tyrosine to tRNA(Tyr) in a two-step reaction: tyrosine is first activated by ATP to form Tyr-AMP and then transferred to the acceptor end of tRNA(Tyr). The sequence is that of Tyrosine--tRNA ligase from Rickettsia peacockii (strain Rustic).